The following is a 61-amino-acid chain: MAIVPKRKTSKQRKRKRQTHDALKVSTLVSCQNCSVQTIPHVTCKSCGFYKGRQVLKVKSS.

The segment covering 1–18 (MAIVPKRKTSKQRKRKRQ) has biased composition (basic residues). The interval 1 to 20 (MAIVPKRKTSKQRKRKRQTH) is disordered.

The protein belongs to the bacterial ribosomal protein bL32 family.

The sequence is that of Large ribosomal subunit protein bL32 (rpmF) from Mycoplasmopsis pulmonis (strain UAB CTIP) (Mycoplasma pulmonis).